Reading from the N-terminus, the 250-residue chain is UPF0736 protein BPUM_1067 (250 aa).

This sequence belongs to the UPF0736 family.

The protein is UPF0736 protein BPUM_1067 of Bacillus pumilus (strain SAFR-032).